Reading from the N-terminus, the 193-residue chain is dCTP deaminase (193 aa).

Residues 110 to 115, Asp-128, 136 to 138, Tyr-171, Lys-178, and Gln-182 contribute to the dCTP site; these read RSSLAR and VLE. Residue Glu-138 is the Proton donor/acceptor of the active site. Positions 169–193 are disordered; sequence RPYNSRQDAKYRGQQGAVASRIDKD.

Belongs to the dCTP deaminase family. Homotrimer.

It catalyses the reaction dCTP + H2O + H(+) = dUTP + NH4(+). It functions in the pathway pyrimidine metabolism; dUMP biosynthesis; dUMP from dCTP (dUTP route): step 1/2. Catalyzes the deamination of dCTP to dUTP. This chain is dCTP deaminase, found in Yersinia pestis bv. Antiqua (strain Antiqua).